A 595-amino-acid chain; its full sequence is Protein UL31 (595 aa).

An N-terminal signal peptide occupies residues Met1–Pro23. Residues Thr47–Ser94 form a disordered region. A compositionally biased stretch (basic and acidic residues) spans Gly69 to Glu82. N-linked (GlcNAc...) asparagine; by host glycans are attached at residues Asn176 and Asn197.

The protein belongs to the herpesviridae U10 family. In terms of assembly, interacts with host CGAS.

The protein resides in the host cytoplasm. It localises to the host nucleus. Its function is as follows. Plays a role in the inhibition of host innate immune system by targeting host CGAS and promoting dissociation of DNA from CGAS, thereby inhibiting the enzymatic activity of CGAS. The polypeptide is Protein UL31 (Homo sapiens (Human)).